The sequence spans 721 residues: mRNA (2'-O-methyladenosine-N(6)-)-methyltransferase (721 aa).

Composition is skewed to polar residues over residues 1–10 and 19–36; these read MTSENHTTIK and PTGS…TSKP. The segment at 1 to 37 is disordered; sequence MTSENHTTIKADSALVMSPTGSTSQAAPFSPSTSKPI. The WW domain occupies 43-77; the sequence is ELIQAGWSKCWSKRENRPYYFNRFTNQSLWEMPVL. The segment at 93-170 is disordered; it reads PASGEANADA…KQGQASTPAP (78 aa). Over residues 132–148 the composition is skewed to low complexity; that stretch reads IPATPTTPTVPISPSTP. The substrate site is built by R239 and R269. 558 to 561 lines the S-adenosyl-L-methionine pocket; the sequence is NPPF. Residues E563 and 593 to 597 contribute to the substrate site; that span reads WRDPP. Position 619–621 (619–621) interacts with S-adenosyl-L-methionine; that stretch reads FEH. Positions 675 to 686 are enriched in low complexity; it reads SGRSLPSPGPSS. A disordered region spans residues 675–721; that stretch reads SGRSLPSPGPSSTNTGEKDSKPAPERTAPSQDNSSPVDKTAQDTTNT. The span at 702–721 shows a compositional bias: polar residues; sequence APSQDNSSPVDKTAQDTTNT.

It belongs to the CAPAM family.

Its subcellular location is the nucleus. The catalysed reaction is a 5'-end (N(7)-methyl 5'-triphosphoguanosine)-(2'-O-methyladenosine) in mRNA + S-adenosyl-L-methionine = a 5'-end (N(7)-methyl 5'-triphosphoguanosine)-(N(6),2'-O-dimethyladenosine) in mRNA + S-adenosyl-L-homocysteine + H(+). With respect to regulation, cap-specific adenosine methyltransferase activity is inhibited by zinc. Its function is as follows. Cap-specific adenosine methyltransferase that catalyzes formation of N(6),2'-O-dimethyladenosine cap (m6A(m)) by methylating the adenosine at the second transcribed position of capped mRNAs. The chain is mRNA (2'-O-methyladenosine-N(6)-)-methyltransferase (pcif1) from Danio rerio (Zebrafish).